The chain runs to 244 residues: HTH-type transcriptional repressor PhnF (244 aa).

The region spanning 8-74 is the HTH gntR-type domain; sequence RILKHQVVRA…RGRTTVVARP (67 aa). The segment at residues 35-54 is a DNA-binding region (H-T-H motif); it reads EREIAEQFEVARETVRQALR.

It localises to the cytoplasm. Functionally, represses the phnDCE operon, involved in the uptake of phosphate, under conditions of phosphate availability in the cell. The chain is HTH-type transcriptional repressor PhnF (phnF) from Mycolicibacterium smegmatis (strain ATCC 700084 / mc(2)155) (Mycobacterium smegmatis).